The sequence spans 161 residues: Nucleotide-binding protein Rpic_2826 (161 aa).

The protein belongs to the YajQ family.

Nucleotide-binding protein. The protein is Nucleotide-binding protein Rpic_2826 of Ralstonia pickettii (strain 12J).